The following is a 294-amino-acid chain: ATP synthase gamma chain (294 aa).

This sequence belongs to the ATPase gamma chain family. As to quaternary structure, F-type ATPases have 2 components, CF(1) - the catalytic core - and CF(0) - the membrane proton channel. CF(1) has five subunits: alpha(3), beta(3), gamma(1), delta(1), epsilon(1). CF(0) has three main subunits: a, b and c.

Its subcellular location is the cell inner membrane. Functionally, produces ATP from ADP in the presence of a proton gradient across the membrane. The gamma chain is believed to be important in regulating ATPase activity and the flow of protons through the CF(0) complex. This Paraburkholderia phytofirmans (strain DSM 17436 / LMG 22146 / PsJN) (Burkholderia phytofirmans) protein is ATP synthase gamma chain.